The chain runs to 198 residues: Ion-translocating oxidoreductase complex subunit B (198 aa).

The interval 1 to 28 (MIITTVYFILVAIAVLALIFGAILGFAS) is hydrophobic. The region spanning 34–92 (EADPIVEKIDALLPQSQCGQCGYPGCKPYAEAIANGDDITKCIPGGQTVIVNIAELMGV) is the 4Fe-4S domain. Residues C51, C54, C59, C75, C115, C118, C121, C125, C145, C148, C151, and C155 each contribute to the [4Fe-4S] cluster site. 4Fe-4S ferredoxin-type domains follow at residues 106–135 (MVAFIDEDMCIGCTKCIQACPVDAIIGTNK) and 136–165 (AMHTIIPDLCTGCELCVPPCPTDCISMIKV).

Belongs to the 4Fe4S bacterial-type ferredoxin family. RnfB subfamily. The complex is composed of six subunits: RnfA, RnfB, RnfC, RnfD, RnfE and RnfG. [4Fe-4S] cluster serves as cofactor.

The protein localises to the cell inner membrane. In terms of biological role, part of a membrane-bound complex that couples electron transfer with translocation of ions across the membrane. The protein is Ion-translocating oxidoreductase complex subunit B of Pasteurella multocida (strain Pm70).